Here is a 505-residue protein sequence, read N- to C-terminus: GMP synthase [glutamine-hydrolyzing] (505 aa).

One can recognise a Glutamine amidotransferase type-1 domain in the interval 3 to 190 (KVLVVNFGGQ…LRKIARISDV (188 aa)). Catalysis depends on C80, which acts as the Nucleophile. Active-site residues include H164 and E166. One can recognise a GMPS ATP-PPase domain in the interval 191–380 (WRPEDQITRI…LGLPEDVVYR (190 aa)). 218 to 224 (SGGVDST) contacts ATP.

It carries out the reaction XMP + L-glutamine + ATP + H2O = GMP + L-glutamate + AMP + diphosphate + 2 H(+). It functions in the pathway purine metabolism; GMP biosynthesis; GMP from XMP (L-Gln route): step 1/1. In terms of biological role, catalyzes the synthesis of GMP from XMP. The chain is GMP synthase [glutamine-hydrolyzing] from Pyrobaculum aerophilum (strain ATCC 51768 / DSM 7523 / JCM 9630 / CIP 104966 / NBRC 100827 / IM2).